Here is a 95-residue protein sequence, read N- to C-terminus: Small ribosomal subunit protein bS18 (95 aa).

The protein belongs to the bacterial ribosomal protein bS18 family. In terms of assembly, part of the 30S ribosomal subunit. Forms a tight heterodimer with protein bS6.

Binds as a heterodimer with protein bS6 to the central domain of the 16S rRNA, where it helps stabilize the platform of the 30S subunit. The sequence is that of Small ribosomal subunit protein bS18 from Rickettsia africae (strain ESF-5).